Consider the following 377-residue polypeptide: Outer membrane porin N (377 aa).

The first 21 residues, 1-21 (MKSKVLALLIPALLAAGAAHA), serve as a signal peptide directing secretion. Residues 175-189 (NNEGASNGQEGTNNG) are compositionally biased toward polar residues. The interval 175–196 (NNEGASNGQEGTNNGRDVRHEN) is disordered.

Belongs to the Gram-negative porin family. Homotrimer.

It localises to the cell outer membrane. Functionally, forms pores that allow passive diffusion of small molecules across the outer membrane. Non-specific porin. In Escherichia coli (strain K12), this protein is Outer membrane porin N (ompN).